A 188-amino-acid polypeptide reads, in one-letter code: GMP synthase [glutamine-hydrolyzing] subunit A (188 aa).

The 188-residue stretch at 1–188 folds into the Glutamine amidotransferase type-1 domain; it reads MIVILNNGGQ…FCKVCGLLGE (188 aa). The active-site Nucleophile is the C76. Residues H163 and E165 contribute to the active site.

In terms of assembly, heterodimer composed of a glutamine amidotransferase subunit (A) and a GMP-binding subunit (B).

The enzyme catalyses XMP + L-glutamine + ATP + H2O = GMP + L-glutamate + AMP + diphosphate + 2 H(+). Its pathway is purine metabolism; GMP biosynthesis; GMP from XMP (L-Gln route): step 1/1. Catalyzes the synthesis of GMP from XMP. The protein is GMP synthase [glutamine-hydrolyzing] subunit A of Methanococcus aeolicus (strain ATCC BAA-1280 / DSM 17508 / OCM 812 / Nankai-3).